The primary structure comprises 356 residues: 7,8-didemethyl-8-hydroxy-5-deazariboflavin synthase (356 aa).

The region spanning 40–280 (ITYSKNVFIP…KDISIQVPPN (241 aa)) is the Radical SAM core domain. [4Fe-4S] cluster-binding residues include C54, C58, and C61.

It belongs to the radical SAM superfamily. CofG family. In terms of assembly, consists of two subunits, CofG and CofH. [4Fe-4S] cluster serves as cofactor.

It catalyses the reaction 5-amino-5-(4-hydroxybenzyl)-6-(D-ribitylimino)-5,6-dihydrouracil + S-adenosyl-L-methionine = 7,8-didemethyl-8-hydroxy-5-deazariboflavin + 5'-deoxyadenosine + L-methionine + NH4(+) + H(+). Its pathway is cofactor biosynthesis; coenzyme F0 biosynthesis. In terms of biological role, catalyzes the radical-mediated synthesis of 7,8-didemethyl-8-hydroxy-5-deazariboflavin from 5-amino-5-(4-hydroxybenzyl)-6-(D-ribitylimino)-5,6-dihydrouracil. The protein is 7,8-didemethyl-8-hydroxy-5-deazariboflavin synthase of Methanococcus aeolicus (strain ATCC BAA-1280 / DSM 17508 / OCM 812 / Nankai-3).